A 304-amino-acid chain; its full sequence is Lipoyl synthase (304 aa).

[4Fe-4S] cluster contacts are provided by Cys41, Cys46, Cys52, Cys68, Cys72, Cys75, and Ser281. The 217-residue stretch at 54–270 (GARRTATFMI…RKIAMEKGFK (217 aa)) folds into the Radical SAM core domain. The disordered stretch occupies residues 282-304 (YHADEQVNEAAKEKQRQGEEQLN).

It belongs to the radical SAM superfamily. Lipoyl synthase family. The cofactor is [4Fe-4S] cluster.

The protein resides in the cytoplasm. It carries out the reaction [[Fe-S] cluster scaffold protein carrying a second [4Fe-4S](2+) cluster] + N(6)-octanoyl-L-lysyl-[protein] + 2 oxidized [2Fe-2S]-[ferredoxin] + 2 S-adenosyl-L-methionine + 4 H(+) = [[Fe-S] cluster scaffold protein] + N(6)-[(R)-dihydrolipoyl]-L-lysyl-[protein] + 4 Fe(3+) + 2 hydrogen sulfide + 2 5'-deoxyadenosine + 2 L-methionine + 2 reduced [2Fe-2S]-[ferredoxin]. The protein operates within protein modification; protein lipoylation via endogenous pathway; protein N(6)-(lipoyl)lysine from octanoyl-[acyl-carrier-protein]. Catalyzes the radical-mediated insertion of two sulfur atoms into the C-6 and C-8 positions of the octanoyl moiety bound to the lipoyl domains of lipoate-dependent enzymes, thereby converting the octanoylated domains into lipoylated derivatives. This Staphylococcus epidermidis (strain ATCC 35984 / DSM 28319 / BCRC 17069 / CCUG 31568 / BM 3577 / RP62A) protein is Lipoyl synthase.